The sequence spans 938 residues: Mediator of RNA polymerase II transcription subunit 16 (938 aa).

Belongs to the Mediator complex subunit 16 family. As to quaternary structure, component of the Mediator complex.

It is found in the nucleus. Functionally, component of the Mediator complex, a coactivator involved in the regulated transcription of nearly all RNA polymerase II-dependent genes. Mediator functions as a bridge to convey information from gene-specific regulatory proteins to the basal RNA polymerase II transcription machinery. Mediator is recruited to promoters by direct interactions with regulatory proteins and serves as a scaffold for the assembly of a functional preinitiation complex with RNA polymerase II and the general transcription factors. The sequence is that of Mediator of RNA polymerase II transcription subunit 16 (SIN4) from Eremothecium gossypii (strain ATCC 10895 / CBS 109.51 / FGSC 9923 / NRRL Y-1056) (Yeast).